The following is a 40-amino-acid chain: Cytolysin EnT (40 aa).

Positions 3 to 12 are plays an important role in the hemolytic activity; sequence ALAGTIIEGA. Residues 11–30 form an N-terminal region region; that stretch reads GASLTFSVLTTILDALGSVS.

It belongs to the actinoporin family. Sea anemone subfamily. In terms of assembly, octamer or nonamer in membranes. Monomer in the soluble state.

It localises to the secreted. The protein localises to the nematocyst. Its subcellular location is the target cell membrane. Pore-forming protein that forms cations-selective hydrophilic pores of around 1 nm and causes cytolysis. Pore formation is a multi-step process that involves specific recognition of membrane sphingomyelin (but neither cholesterol nor phosphatidylcholine) using aromatic rich region and adjacent phosphocholine (POC) binding site, firm binding to the membrane (mainly driven by hydrophobic interactions) accompanied by the transfer of the N-terminal region to the lipid-water interface and finally pore formation after oligomerization of monomers. This toxin shows hemolytic activities. This is Cytolysin EnT from Entacmaea quadricolor (Bubble-tip anemone).